A 40-amino-acid chain; its full sequence is Ferredoxin-2 (40 aa).

The 38-residue stretch at 3 to 40 folds into the 2Fe-2S ferredoxin-type domain; that stretch reads YNIKLITPEGTKEITCSDSEYILDAAEEKGLDLPYSCR. C39 lines the [2Fe-2S] cluster pocket.

The protein belongs to the 2Fe2S plant-type ferredoxin family. Requires [2Fe-2S] cluster as cofactor.

Its subcellular location is the plastid. The protein resides in the chloroplast. Functionally, ferredoxins are iron-sulfur proteins that transfer electrons in a wide variety of metabolic reactions. The polypeptide is Ferredoxin-2 (Pisum sativum (Garden pea)).